A 406-amino-acid polypeptide reads, in one-letter code: Probable tRNA sulfurtransferase (406 aa).

The region spanning 62 to 167 is the THUMP domain; sequence AEVSNRLTKV…QDATYLSFED (106 aa). Residues 185-186, 210-211, Arg267, Gly289, and Gln298 contribute to the ATP site; these read ML and HF.

This sequence belongs to the ThiI family.

The protein resides in the cytoplasm. The enzyme catalyses [ThiI sulfur-carrier protein]-S-sulfanyl-L-cysteine + a uridine in tRNA + 2 reduced [2Fe-2S]-[ferredoxin] + ATP + H(+) = [ThiI sulfur-carrier protein]-L-cysteine + a 4-thiouridine in tRNA + 2 oxidized [2Fe-2S]-[ferredoxin] + AMP + diphosphate. The catalysed reaction is [ThiS sulfur-carrier protein]-C-terminal Gly-Gly-AMP + S-sulfanyl-L-cysteinyl-[cysteine desulfurase] + AH2 = [ThiS sulfur-carrier protein]-C-terminal-Gly-aminoethanethioate + L-cysteinyl-[cysteine desulfurase] + A + AMP + 2 H(+). The protein operates within cofactor biosynthesis; thiamine diphosphate biosynthesis. In terms of biological role, catalyzes the ATP-dependent transfer of a sulfur to tRNA to produce 4-thiouridine in position 8 of tRNAs, which functions as a near-UV photosensor. Also catalyzes the transfer of sulfur to the sulfur carrier protein ThiS, forming ThiS-thiocarboxylate. This is a step in the synthesis of thiazole, in the thiamine biosynthesis pathway. The sulfur is donated as persulfide by IscS. This is Probable tRNA sulfurtransferase from Lactococcus lactis subsp. cremoris (strain MG1363).